Here is a 306-residue protein sequence, read N- to C-terminus: 33 kDa chaperonin (306 aa).

2 disulfide bridges follow: C242/C244 and C275/C278.

Belongs to the HSP33 family. In terms of processing, under oxidizing conditions two disulfide bonds are formed involving the reactive cysteines. Under reducing conditions zinc is bound to the reactive cysteines and the protein is inactive.

The protein localises to the cytoplasm. In terms of biological role, redox regulated molecular chaperone. Protects both thermally unfolding and oxidatively damaged proteins from irreversible aggregation. Plays an important role in the bacterial defense system toward oxidative stress. This is 33 kDa chaperonin from Gloeobacter violaceus (strain ATCC 29082 / PCC 7421).